The chain runs to 228 residues: tRNA (guanine-N(1)-)-methyltransferase (228 aa).

S-adenosyl-L-methionine-binding positions include G111 and 131–136; that span reads IGDFIL.

Belongs to the RNA methyltransferase TrmD family. As to quaternary structure, homodimer.

The protein resides in the cytoplasm. The enzyme catalyses guanosine(37) in tRNA + S-adenosyl-L-methionine = N(1)-methylguanosine(37) in tRNA + S-adenosyl-L-homocysteine + H(+). In terms of biological role, specifically methylates guanosine-37 in various tRNAs. The polypeptide is tRNA (guanine-N(1)-)-methyltransferase (Pelagibacter ubique (strain HTCC1062)).